We begin with the raw amino-acid sequence, 111 residues long: HTH-type transcriptional regulator SinR (111 aa).

The region spanning 6–61 is the HTH cro/C1-type domain; it reads IKQYRKEKGYSLSELAEKAGVAKSYLSSIERNLQTNPSIQFLEKVSAVLDVSVHTL. The H-T-H motif DNA-binding region spans 17 to 36; sequence LSELAEKAGVAKSYLSSIER. Positions 65-103 constitute a Sin domain; sequence KHETEYDGQLDSEWEKLVRDAMTSGVSKKQFREFLDYQK.

In terms of assembly, homotetramer in the absence of SinI. Heterodimer with SinI. Interaction with SinI disrupts the SinR tetramer and its repressor activity. Interacts with hpr.

In terms of biological role, negative as well as positive regulator of alternate developmental processes that are induced at the end of vegetative growth in response to nutrient depletion. Binds to the alkaline protease (aprE) gene at two sites. Also acts as a repressor of the key sporulation gene spo0A. Negatively regulates transcription of the eps operon, which is responsible for the biosynthesis of an exopolysaccharide involved in biofilm formation; therefore it could govern the transition between a state in which bacteria swim or swarm and a state in which bacteria assemble into multicellular communities. Acts with Hpr as a corepressor of epr expression. Also negatively regulates transcription of the lutABC operon, which is required for lactate utilization. Repressor activity is regulated by SinI. The protein is HTH-type transcriptional regulator SinR (sinR) of Bacillus subtilis (strain 168).